A 20-amino-acid chain; its full sequence is Chrysophsin-3 (20 aa).

A Histidine amide modification is found at His20.

Gill.

It is found in the secreted. In terms of biological role, has antibacterial activity against Gram-positive bacteria B.subtilis ATCC 6633, L.garvieae ATCC 49156 and S.iniae F-8502, and Gram-negative bacteria E.coli WT-2, V.anguillarum ATCC 19264, V.penaeicida KHA, V.harveyi ATCC 14126, V.vulnificus ATCC 33148, A.salmonicida NCMB 1102 and P.putida ATCC 12633. Has hemolytic activity against human red blood cells. Seems to disrupt the membranes by adopting an alpha helical conformation. May play a significant role in innate host defense. The chain is Chrysophsin-3 from Pagrus major (Red sea bream).